A 453-amino-acid chain; its full sequence is Growth/differentiation factor 9 (453 aa).

Positions 1-27 are cleaved as a signal peptide; that stretch reads MALPNKFFLWFCCFAWLCFPISLDSLP. The propeptide occupies 28–318; the sequence is SRGEAQIVAR…EGVRSSRHRR (291 aa). N-linked (GlcNAc...) asparagine glycans are attached at residues Asn-163, Asn-236, Asn-255, and Asn-269. A disordered region spans residues 304–328; sequence GEEAAEGVRSSRHRRDQESASSELK. Over residues 318–328 the composition is skewed to basic and acidic residues; that stretch reads RDQESASSELK. An N-linked (GlcNAc...) asparagine glycan is attached at Asn-337. 3 cysteine pairs are disulfide-bonded: Cys-352/Cys-418, Cys-381/Cys-450, and Cys-385/Cys-452.

Belongs to the TGF-beta family. As to quaternary structure, homodimer or heterodimer (Potential). But, in contrast to other members of this family, cannot be disulfide-linked. Post-translationally, phosphorylated; phosphorylation is critical for GDF9 function.

It is found in the secreted. In terms of biological role, required for ovarian folliculogenesis. The chain is Growth/differentiation factor 9 (GDF9) from Ovis aries (Sheep).